Here is a 201-residue protein sequence, read N- to C-terminus: Recombination protein RecR (201 aa).

A C4-type zinc finger spans residues 57–72 (CADCRTFTEQEKCNIC). In terms of domain architecture, Toprim spans 81–176 (GQICVVESPA…DASRIAHGVP (96 aa)).

It belongs to the RecR family.

May play a role in DNA repair. It seems to be involved in an RecBC-independent recombinational process of DNA repair. It may act with RecF and RecO. The protein is Recombination protein RecR of Cronobacter sakazakii (strain ATCC BAA-894) (Enterobacter sakazakii).